The following is a 310-amino-acid chain: Putative dihydroorotate dehydrogenase A (fumarate) (310 aa).

Substrate is bound by residues Lys45, 69–73 (NSMGL), and Asn128. An FMN-binding site is contributed by 45-46 (KT). FMN is bound at residue Asn128. The Nucleophile role is filled by Cys131. FMN contacts are provided by Lys165 and Val193. Substrate is bound at residue 194–195 (NS). FMN contacts are provided by residues Gly220, 248-249 (GG), and 270-271 (GT).

The protein belongs to the dihydroorotate dehydrogenase family. Type 1 subfamily. As to quaternary structure, homodimer. Requires FMN as cofactor.

The protein localises to the cytoplasm. It carries out the reaction (S)-dihydroorotate + fumarate = orotate + succinate. Its pathway is pyrimidine metabolism; UMP biosynthesis via de novo pathway. In terms of biological role, catalyzes the conversion of dihydroorotate to orotate with fumarate as the electron acceptor. The protein is Putative dihydroorotate dehydrogenase A (fumarate) (pyrD) of Streptococcus agalactiae serotype Ia (strain ATCC 27591 / A909 / CDC SS700).